The chain runs to 361 residues: RLA class I histocompatibility antigen, alpha chain 19-1 (361 aa).

The N-terminal stretch at 1-24 (MGSIPPRTLLLLLAGALTLKDTQA) is a signal peptide. The tract at residues 25-114 (GSHSMRYFYT…ALRYYNQSAA (90 aa)) is alpha-1. Topologically, residues 25–308 (GSHSMRYFYT…EPPAQPTALI (284 aa)) are extracellular. N110 is a glycosylation site (N-linked (GlcNAc...) asparagine). Residues 115 to 206 (GSHTFQTMFG…EMGKETLQRA (92 aa)) are alpha-2. 2 disulfide bridges follow: C125/C188 and C227/C283. The tract at residues 207 to 298 (DPPKAHVTHH…GLPEPLTLTW (92 aa)) is alpha-3. The region spanning 209–297 (PKAHVTHHPA…EGLPEPLTLT (89 aa)) is the Ig-like C1-type domain. A connecting peptide region spans residues 299 to 308 (EPPAQPTALI). Residues 309–329 (VGIVAGVLGVLLILGAVVAVV) traverse the membrane as a helical segment. The Cytoplasmic segment spans residues 330-361 (RRKKHSSDGKGGRYTPAAGGHRDQGSDDSLMP). The disordered stretch occupies residues 335 to 361 (SSDGKGGRYTPAAGGHRDQGSDDSLMP). Phosphoserine occurs at positions 355 and 358.

Belongs to the MHC class I family. Heterodimer of an alpha chain and a beta chain (beta-2-microglobulin).

Its subcellular location is the membrane. Involved in the presentation of foreign antigens to the immune system. The sequence is that of RLA class I histocompatibility antigen, alpha chain 19-1 from Oryctolagus cuniculus (Rabbit).